A 149-amino-acid polypeptide reads, in one-letter code: 3-dehydroquinate dehydratase (149 aa).

The active-site Proton acceptor is Tyr-26. Residues Asn-77, His-83, and Asp-90 each coordinate substrate. His-103 acts as the Proton donor in catalysis. Residues 104–105 (LS) and Arg-114 contribute to the substrate site.

This sequence belongs to the type-II 3-dehydroquinase family. In terms of assembly, homododecamer.

It carries out the reaction 3-dehydroquinate = 3-dehydroshikimate + H2O. The protein operates within metabolic intermediate biosynthesis; chorismate biosynthesis; chorismate from D-erythrose 4-phosphate and phosphoenolpyruvate: step 3/7. Functionally, catalyzes a trans-dehydration via an enolate intermediate. The protein is 3-dehydroquinate dehydratase of Aeromonas salmonicida (strain A449).